The sequence spans 129 residues: MAKPAARPRKKVKKTVVDGIAHIHASFNNTIVTITDRQGNALSWATSGGSGFRGSRKSTPFAAQIAAERAGQAALEYGLKNLDVNVKGPGPGRESAVRALNSCGYKIASITDVTPIPHNGCRPPKKRRV.

Belongs to the universal ribosomal protein uS11 family. As to quaternary structure, part of the 30S ribosomal subunit. Interacts with proteins S7 and S18. Binds to IF-3.

Its function is as follows. Located on the platform of the 30S subunit, it bridges several disparate RNA helices of the 16S rRNA. Forms part of the Shine-Dalgarno cleft in the 70S ribosome. This Pseudomonas entomophila (strain L48) protein is Small ribosomal subunit protein uS11.